A 338-amino-acid polypeptide reads, in one-letter code: uncharacterized protein (338 aa).

An N-terminal signal peptide occupies residues 1 to 29 (MIKQLCKNITICTLALSTTFTVLPATSFA).

The protein belongs to the aerolysin family.

This is an uncharacterized protein from Staphylococcus aureus (strain USA300).